Here is a 324-residue protein sequence, read N- to C-terminus: Geranylgeranyl pyrophosphate synthase dpmpD (324 aa).

The isopentenyl diphosphate site is built by lysine 50, arginine 53, and histidine 82. Mg(2+) is bound by residues aspartate 89 and aspartate 93. Dimethylallyl diphosphate is bound at residue arginine 98. Arginine 99 serves as a coordination point for isopentenyl diphosphate. Lysine 176, threonine 177, and glutamine 210 together coordinate dimethylallyl diphosphate. Aspartate 213 is a Mg(2+) binding site. Residues asparagine 217, lysine 227, and lysine 237 each contribute to the dimethylallyl diphosphate site.

Belongs to the FPP/GGPP synthase family. Requires Mg(2+) as cofactor.

The enzyme catalyses isopentenyl diphosphate + dimethylallyl diphosphate = (2E)-geranyl diphosphate + diphosphate. The catalysed reaction is isopentenyl diphosphate + (2E)-geranyl diphosphate = (2E,6E)-farnesyl diphosphate + diphosphate. It carries out the reaction isopentenyl diphosphate + (2E,6E)-farnesyl diphosphate = (2E,6E,10E)-geranylgeranyl diphosphate + diphosphate. Its pathway is secondary metabolite biosynthesis; terpenoid biosynthesis. Functionally, geranylgeranyl pyrophosphate synthase; part of the gene cluster that mediates the biosynthesis of diterpenoid pyrones. The first step of the pathway is the synthesis of the alpha-pyrone moiety by the polyketide synthase dpmpA via condensation of one acetyl-CoA starter unit with 3 malonyl-CoA units and 2 methylations. The alpha-pyrone is then combined with geranylgeranyl pyrophosphate (GGPP) formed by the GGPP synthase dpmpD through the action of the prenyltransferase dpmpC to yield a linear alpha-pyrone diterpenoid. Subsequent steps in the diterpenoid pyrone biosynthetic pathway involve the decalin core formation, which is initiated by the epoxidation of the C10-C11 olefin by the FAD-dependent oxidoreductase dpmpE, and is followed by a cyclization cascade catalyzed by the terpene cyclase dpmpB. The short chain dehydrogenase/reductase dpmpG then oxidizes the 8S hydroxy group to a ketone and the short chain dehydrogenase/reductase dpmpH reduces the ketone to the 8R hydroxy group to yield higginsianin B. Higginsianin B is further methylated by the methyltransferase dpmpI to produce the intermediate named FDDP B. The cytochrome P450 monooxygenase dpmpJ then oxidizes the C-26 methyl to primary alcohol, producing the final diterpenoid pyrone with a C-26 primary alcohol on the gamma-pyrone moiety named FDDP C. The polypeptide is Geranylgeranyl pyrophosphate synthase dpmpD (Macrophomina phaseolina (strain MS6) (Charcoal rot fungus)).